The sequence spans 146 residues: MRLEELKAPAGANKRTKRVGRGTGSGHGKTSTRGHKGQKSRSGGGVRPGFEGGQMPLQRRLPKRGFNNIFKKVYAIVNVEDLNIFPDGSEVNPDTLQETGLVKAIKDGVKILGNGVLEKRLQVKAHKISKQAEEKITAKGGKVEVI.

Positions 1–59 (MRLEELKAPAGANKRTKRVGRGTGSGHGKTSTRGHKGQKSRSGGGVRPGFEGGQMPLQR) are disordered. The span at 30 to 39 (TSTRGHKGQK) shows a compositional bias: basic residues. The segment covering 42–52 (SGGGVRPGFEG) has biased composition (gly residues).

This sequence belongs to the universal ribosomal protein uL15 family. In terms of assembly, part of the 50S ribosomal subunit.

In terms of biological role, binds to the 23S rRNA. In Syntrophomonas wolfei subsp. wolfei (strain DSM 2245B / Goettingen), this protein is Large ribosomal subunit protein uL15.